Consider the following 415-residue polypeptide: F-box protein ETP1 (415 aa).

Positions 1–46 (MTIPDLCNDLVDEILCRVPARNLKRLRSTSKRWNRLFKDDRRFARE) constitute an F-box domain.

As to quaternary structure, interacts with EIN2 (via C-terminus).

Its function is as follows. Negative regulator of EIN2 protein stability. This chain is F-box protein ETP1, found in Arabidopsis thaliana (Mouse-ear cress).